The following is a 413-amino-acid chain: Probable glucan 1,3-beta-glucosidase ARB_04467 (413 aa).

A signal peptide spans 1–17 (MKFGSLLGLSLVGLSVA). The substrate site is built by E46, E202, and Y262. Residue E202 is the Proton donor of the active site. The cysteines at positions 282 and 412 are disulfide-linked. E300 serves as the catalytic Nucleophile.

It belongs to the glycosyl hydrolase 5 (cellulase A) family. In terms of assembly, monomer.

The protein localises to the secreted. Its subcellular location is the cell wall. It carries out the reaction Successive hydrolysis of beta-D-glucose units from the non-reducing ends of (1-&gt;3)-beta-D-glucans, releasing alpha-glucose.. In terms of biological role, major glucan 1,3-beta-glucosidase required for cell wall integrity. Beta-glucanases participate in the metabolism of beta-glucan, the main structural component of the cell wall. Can also function biosynthetically as a transglycosylase. Functions to deliver glucan from the cell to the extracellular matrix. Involved in cell-substrate and cell-cell adhesion. The protein is Probable glucan 1,3-beta-glucosidase ARB_04467 of Arthroderma benhamiae (strain ATCC MYA-4681 / CBS 112371) (Trichophyton mentagrophytes).